Reading from the N-terminus, the 198-residue chain is Protein GrpE (198 aa).

Basic and acidic residues predominate over residues 1–21; that stretch reads MMKKAEDPLQDREGTIQEHTE. The disordered stretch occupies residues 1–56; sequence MMKKAEDPLQDREGTIQEHTEGQAGTAAADQSAAVETPESRIAGLEREVQAEKEQN. The segment covering 22–34 has biased composition (low complexity); that stretch reads GQAGTAAADQSAA. Positions 44-56 are enriched in basic and acidic residues; sequence GLEREVQAEKEQN.

It belongs to the GrpE family. Homodimer.

It is found in the cytoplasm. Functionally, participates actively in the response to hyperosmotic and heat shock by preventing the aggregation of stress-denatured proteins, in association with DnaK and GrpE. It is the nucleotide exchange factor for DnaK and may function as a thermosensor. Unfolded proteins bind initially to DnaJ; upon interaction with the DnaJ-bound protein, DnaK hydrolyzes its bound ATP, resulting in the formation of a stable complex. GrpE releases ADP from DnaK; ATP binding to DnaK triggers the release of the substrate protein, thus completing the reaction cycle. Several rounds of ATP-dependent interactions between DnaJ, DnaK and GrpE are required for fully efficient folding. This is Protein GrpE from Chlorobium luteolum (strain DSM 273 / BCRC 81028 / 2530) (Pelodictyon luteolum).